Reading from the N-terminus, the 973-residue chain is MSGIGNKRAAGEPGTSMPPEKKTAVEDSGTTVETIKLGGVSSTEELDIRTLQSKNRKLAEMLDQRQAIEDELREHIEKLERRQATDDASLLIVNRYWSQFDENIRIILKRYDLDQGLGDLLTERKALVVPEPEPDSDSNQERKDDRERGDGQEPAFSFLATLASSSSEEMESQLQERVESSRRAVSQIVTVYDKLQEKVDLLSRKLNSGDNLIVEEAVQELNSFLAQENVRLQELTDLLQEKHHTMSQEFCKLQGKVETAESRVSVLESMIDDLQWDIDKIRKREQRLNRHLAEVLERVNSKGYKVYGAGSSLYGGTITINARKFEEMNAELEENKELAQNRHCELEKLRQDFEEVTTQNEKLKVELRSAVEEVVKETPEYRCMQSQFSVLYNESLQLKAHLDEARTLLHGTRGTHQRQVELIERDEVSLHKKLRTEVIQLEDTLAQVRKEYEMLRIEFEQTLAANEQAGPINREMRHLISSLQNHNHQLKGEVLRYKRKLREAQSDLNKTRLRSGSALLQSQSSTEDPKDEPTELKQDSEDLATHSSALKASQEDEVKSKRDEEERERERREKEREREREREKEKEREREKQKLKESEKERDSVKDKEKGKHDDGRKKEAEIIKQLKIELKKAQESQKEMKLLLDMYRSAPKEQRDKVQLMAAEKKSKAELEDLRQRLKDLEDKEKKENKKMADEDALRKIRAVEEQIEYLQKKLAMAKQEEEALLSEMDVTGQAFEDMQEQNIRLMQQLREKDDANFKLMSERIKSNQIHKLLKEEKEELADQVLTLKTQVDAQLQVVRKLEEKEHLLQSNIGTGEKELGLRTQALEMNKRKAMEAAQLADDLKAQLELAQKKLHDFQDEIVENSVTKEKDLFNFKRAQEDISRLRRKLETTKKPDNVPKCDEILMEEIKDYKARLTCPCCNMRKKDAVLTKCFHVFCFECVKTRYDTRQRKCPKCNAAFGANDFHRIYIG.

A disordered region spans residues 1 to 37; it reads MSGIGNKRAAGEPGTSMPPEKKTAVEDSGTTVETIKL. Lys21 is modified (N6-acetyllysine). Phosphoserine is present on Ser41. Residues 43–90 adopt a coiled-coil conformation; the sequence is TEELDIRTLQSKNRKLAEMLDQRQAIEDELREHIEKLERRQATDDASL. A disordered region spans residues 128-153; the sequence is VVPEPEPDSDSNQERKDDRERGDGQE. Phosphoserine is present on residues Ser136 and Ser138. The segment covering 139 to 151 has biased composition (basic and acidic residues); that stretch reads NQERKDDRERGDG. 2 coiled-coil regions span residues 168 to 378 and 429 to 896; these read EEME…VKET and SLHK…TTKK. N6-acetyllysine occurs at positions 348 and 510. A disordered region spans residues 507-620; the sequence is DLNKTRLRSG…GKHDDGRKKE (114 aa). Ser522 is modified (phosphoserine). Basic and acidic residues-rich tracts occupy residues 527–544 and 553–620; these read EDPK…EDLA and SQED…RKKE. At Ser560 the chain carries Phosphoserine. The RING-type zinc-finger motif lies at 920-959; it reads CPCCNMRKKDAVLTKCFHVFCFECVKTRYDTRQRKCPKCN.

Belongs to the BRE1 family. As to quaternary structure, component of the RNF20/40 complex (also known as BRE1 complex) probably composed of 2 copies of RNF20/BRE1A and 2 copies of RNF40/BRE1B. Interacts with UBE2E1/UBCH6. Interacts with p53/TP53 and WAC. Interacts with PAF1; the interaction mediates the association of the PAF1 and RNF20/40 complexes which is a prerequsite for recruitment of UBE2A/B. Interacts with PA2G4. Interacts with FBXL19.

The protein resides in the nucleus. The enzyme catalyses S-ubiquitinyl-[E2 ubiquitin-conjugating enzyme]-L-cysteine + [acceptor protein]-L-lysine = [E2 ubiquitin-conjugating enzyme]-L-cysteine + N(6)-ubiquitinyl-[acceptor protein]-L-lysine.. It participates in protein modification; protein ubiquitination. Functionally, component of the RNF20/40 E3 ubiquitin-protein ligase complex that mediates monoubiquitination of 'Lys-120' of histone H2B (H2BK120ub1). H2BK120ub1 gives a specific tag for epigenetic transcriptional activation and is also prerequisite for histone H3 'Lys-4' and 'Lys-79' methylation (H3K4me and H3K79me, respectively). It thereby plays a central role in histone code and gene regulation. The RNF20/40 complex forms a H2B ubiquitin ligase complex in cooperation with the E2 enzyme UBE2A or UBE2B; reports about the cooperation with UBE2E1/UBCH are contradictory. Required for transcriptional activation of Hox genes. Recruited to the MDM2 promoter, probably by being recruited by p53/TP53, and thereby acts as a transcriptional coactivator. Mediates the polyubiquitination of PA2G4 leading to its proteasome-mediated degradation. The chain is E3 ubiquitin-protein ligase BRE1A (Rnf20) from Mus musculus (Mouse).